The primary structure comprises 833 residues: MSFYNHKEIEPKWQGYWAEHHTFKTGTDASKPKFYALDMFPYPSGAGLHVGHPEGYTATDILSRYKRAQGYNVLHPMGWDAFGLPAEQYAMDTGNDPAEFTAENIANFKRQINALGFSYDWDREVNTTDPNYYKWTQWIFTKLYEKGLAYEAEVPVNWVEELGTAIANEEVLPDGTSERGGYPVVRKPMRQWMLKITAYAERLLNDLDELDWPESIKDMQRNWIGKSTGANVTFKVKGTDKEFTVFTTRPDTLFGATFTVLAPEHELVDAITSTEQAEAVADYKHQASLKSDLARTDLAKEKTGVWTGAYAINPVNGKEIPIWIADYVLASYGTGAVMAVPAHDQRDWEFAKQFDLPIVEVLEGGNVEEAAYTEDGLHVNSDFLDGLNKEDAIAKIVAWLEEKGCGQEKVTYRLRDWLFSRQRYWGEPIPIIHWEDGTSTAVPESELPLVLPVTKDIRPSGTGESPLANLTDWLEVTREDGVKGRRETNTMPQWAGSSWYYLRYIDPHNTEKLADEDLLKQWLPVDIYVGGAEHAVLHLLYARFWHKFLYDLGVVPTKEPFQKLFNQGMILGTSYRDHRGALVATDKVEKRDGSFFHVETGEELEQAPAKMSKSLKNVVNPDDVVEQYGADTLRVYEMFMGPLDASIAWSEEGLEGSRKFLDRVYRLITSKEILAENNGALDKVYNETVKAVTEQIESLKFNTAIAQLMVFVNAANKEDKLYVDYAKGFIQLIAPFAPHLAEELWQTVAETGESISYVAWPTWDESKLVEDEIEIVVQIKGKVRAKLMVAKDLSREELQEIALADEKVKAEIDGKEIVKVIAVPNKLVNIVVK.

The short motif at proline 41–histidine 52 is the 'HIGH' region element. Positions lysine 610 to serine 614 match the 'KMSKS' region motif. Residue lysine 613 participates in ATP binding.

Belongs to the class-I aminoacyl-tRNA synthetase family.

It localises to the cytoplasm. The catalysed reaction is tRNA(Leu) + L-leucine + ATP = L-leucyl-tRNA(Leu) + AMP + diphosphate. This chain is Leucine--tRNA ligase, found in Streptococcus pneumoniae (strain Hungary19A-6).